A 542-amino-acid polypeptide reads, in one-letter code: Delta 8-(E)-sphingolipid desaturase (542 aa).

Positions 1–75 (MVVSREEVRE…FKRWSIGRVK (75 aa)) constitute a Cytochrome b5 heme-binding domain. 2 residues coordinate heme: histidine 35 and histidine 58. 2 helical membrane passes run 215–235 (WYTL…FIAH) and 248–268 (IDNI…LGWW). Positions 235 to 239 (HDAGH) match the Histidine box-1 motif. Positions 272–276 (HNVHH) match the Histidine box-2 motif. The next 3 helical transmembrane spans lie at 329–346 (LYYP…RLSW), 360–380 (AAWF…WFFY), and 393–413 (FWFL…IVLS). Residues 455 to 459 (QAIHH) carry the Histidine box-3 motif.

This sequence belongs to the fatty acid desaturase type 1 family.

It is found in the membrane. It carries out the reaction an N-acylsphing-4-enine + 2 Fe(II)-[cytochrome b5] + O2 + 2 H(+) = a (4E,8E)-4-sphinga-4,8-dienine ceramide + 2 Fe(III)-[cytochrome b5] + 2 H2O. Its pathway is lipid metabolism; sphingolipid metabolism. In terms of biological role, delta(8)-fatty-acid desaturase which introduces a double bond at the 8-position in the long-chain base (LCB) of ceramides. Required for the formation of the di-unsaturated sphingoid base (E,E)-sphinga-4,8-dienine during glucosylceramide (GluCer) biosynthesis. In Komagataella phaffii (strain GS115 / ATCC 20864) (Yeast), this protein is Delta 8-(E)-sphingolipid desaturase.